The chain runs to 292 residues: Small ribosomal subunit biogenesis GTPase RsgA (292 aa).

The region spanning 64–221 is the CP-type G domain; it reads RSELFRPAVA…LVDTPGFSSL (158 aa). GTP-binding positions include 113-116 and 164-172; these read NKMD and GPSGVGKST. Residues C245, C250, H252, and C258 each coordinate Zn(2+).

Belongs to the TRAFAC class YlqF/YawG GTPase family. RsgA subfamily. In terms of assembly, monomer. Associates with 30S ribosomal subunit, binds 16S rRNA. The cofactor is Zn(2+).

The protein resides in the cytoplasm. In terms of biological role, one of several proteins that assist in the late maturation steps of the functional core of the 30S ribosomal subunit. Helps release RbfA from mature subunits. May play a role in the assembly of ribosomal proteins into the subunit. Circularly permuted GTPase that catalyzes slow GTP hydrolysis, GTPase activity is stimulated by the 30S ribosomal subunit. This is Small ribosomal subunit biogenesis GTPase RsgA from Clostridium botulinum (strain 657 / Type Ba4).